The primary structure comprises 144 residues: MDKIDIYSDGACKGNPGRGGWGALLVMGEREKEIFGGELDTTNNRMELKAVIEALNLLTRPCEVVVHTDSQYVQKGISEWIHGWKARGWKTAAKAPVKNVDLWQALDAAQARHKIEWRWVRGHNGHAGNERADALANRGVEVAA.

One can recognise an RNase H type-1 domain in the interval 1–141 (MDKIDIYSDG…ADALANRGVE (141 aa)). Residues aspartate 9, glutamate 47, aspartate 69, and aspartate 133 each coordinate Mg(2+).

The protein belongs to the RNase H family. In terms of assembly, monomer. The cofactor is Mg(2+).

Its subcellular location is the cytoplasm. The enzyme catalyses Endonucleolytic cleavage to 5'-phosphomonoester.. Endonuclease that specifically degrades the RNA of RNA-DNA hybrids. The polypeptide is Ribonuclease H (Janthinobacterium sp. (strain Marseille) (Minibacterium massiliensis)).